We begin with the raw amino-acid sequence, 257 residues long: Pyridoxine 5'-phosphate synthase (257 aa).

N6 is a 3-amino-2-oxopropyl phosphate binding site. 8–9 is a binding site for 1-deoxy-D-xylulose 5-phosphate; sequence DH. R17 contributes to the 3-amino-2-oxopropyl phosphate binding site. Catalysis depends on H41, which acts as the Proton acceptor. R43 and H48 together coordinate 1-deoxy-D-xylulose 5-phosphate. E68 acts as the Proton acceptor in catalysis. T98 provides a ligand contact to 1-deoxy-D-xylulose 5-phosphate. H210 functions as the Proton donor in the catalytic mechanism. 3-amino-2-oxopropyl phosphate-binding positions include G211 and 232-233; that span reads GQ.

The protein belongs to the PNP synthase family. In terms of assembly, homooctamer; tetramer of dimers.

The protein resides in the cytoplasm. It carries out the reaction 3-amino-2-oxopropyl phosphate + 1-deoxy-D-xylulose 5-phosphate = pyridoxine 5'-phosphate + phosphate + 2 H2O + H(+). It participates in cofactor biosynthesis; pyridoxine 5'-phosphate biosynthesis; pyridoxine 5'-phosphate from D-erythrose 4-phosphate: step 5/5. Functionally, catalyzes the complicated ring closure reaction between the two acyclic compounds 1-deoxy-D-xylulose-5-phosphate (DXP) and 3-amino-2-oxopropyl phosphate (1-amino-acetone-3-phosphate or AAP) to form pyridoxine 5'-phosphate (PNP) and inorganic phosphate. This chain is Pyridoxine 5'-phosphate synthase, found in Campylobacter jejuni subsp. jejuni serotype O:6 (strain 81116 / NCTC 11828).